Here is a 307-residue protein sequence, read N- to C-terminus: Elongation factor Ts (307 aa).

The involved in Mg(2+) ion dislocation from EF-Tu stretch occupies residues 80–83; sequence TDFV.

It belongs to the EF-Ts family.

The protein localises to the cytoplasm. In terms of biological role, associates with the EF-Tu.GDP complex and induces the exchange of GDP to GTP. It remains bound to the aminoacyl-tRNA.EF-Tu.GTP complex up to the GTP hydrolysis stage on the ribosome. The chain is Elongation factor Ts (tsf) from Zymomonas mobilis subsp. mobilis (strain ATCC 31821 / ZM4 / CP4).